Consider the following 94-residue polypeptide: Aspartyl/glutamyl-tRNA(Asn/Gln) amidotransferase subunit C (94 aa).

Residues P72–V94 are disordered.

This sequence belongs to the GatC family. As to quaternary structure, heterotrimer of A, B and C subunits.

The catalysed reaction is L-glutamyl-tRNA(Gln) + L-glutamine + ATP + H2O = L-glutaminyl-tRNA(Gln) + L-glutamate + ADP + phosphate + H(+). It carries out the reaction L-aspartyl-tRNA(Asn) + L-glutamine + ATP + H2O = L-asparaginyl-tRNA(Asn) + L-glutamate + ADP + phosphate + 2 H(+). Functionally, allows the formation of correctly charged Asn-tRNA(Asn) or Gln-tRNA(Gln) through the transamidation of misacylated Asp-tRNA(Asn) or Glu-tRNA(Gln) in organisms which lack either or both of asparaginyl-tRNA or glutaminyl-tRNA synthetases. The reaction takes place in the presence of glutamine and ATP through an activated phospho-Asp-tRNA(Asn) or phospho-Glu-tRNA(Gln). This Moorella thermoacetica (strain ATCC 39073 / JCM 9320) protein is Aspartyl/glutamyl-tRNA(Asn/Gln) amidotransferase subunit C.